Consider the following 166-residue polypeptide: Small ribosomal subunit protein uS5 (166 aa).

Residues 11 to 74 (LQEKLIAVNR…EKARRNMKTV (64 aa)) form the S5 DRBM domain.

This sequence belongs to the universal ribosomal protein uS5 family. Part of the 30S ribosomal subunit. Contacts proteins S4 and S8.

With S4 and S12 plays an important role in translational accuracy. In terms of biological role, located at the back of the 30S subunit body where it stabilizes the conformation of the head with respect to the body. This Photorhabdus laumondii subsp. laumondii (strain DSM 15139 / CIP 105565 / TT01) (Photorhabdus luminescens subsp. laumondii) protein is Small ribosomal subunit protein uS5.